An 895-amino-acid chain; its full sequence is Receptor-like protein kinase FERONIA (895 aa).

An N-terminal signal peptide occupies residues 1–27 (MKITEGRFRLSLLLLLLLISAATLISA). Residues 28 to 447 (ADYSPTEKIL…TTRKSKSNTA (420 aa)) are Extracellular-facing. N-linked (GlcNAc...) asparagine glycans are attached at residues asparagine 46, asparagine 124, asparagine 142, asparagine 171, asparagine 219, asparagine 269, asparagine 305, asparagine 330, asparagine 345, and asparagine 410. A helical transmembrane segment spans residues 448 to 468 (IIAGAASGAVVLALIIGFCVF). Over 469 to 895 (GAYRRRKRGD…FSQIMNPKGR (427 aa)) the chain is Cytoplasmic. The Protein kinase domain maps to 536 to 810 (FDESRVLGVG…GDVLWNLEFA (275 aa)). ATP contacts are provided by residues 542–550 (LGVGGFGKV) and lysine 565. Aspartate 661 acts as the Proton acceptor in catalysis. The interval 844-895 (NDKSSDVYEGNVTDSRSSGIDMSIGGRSLASEDSDGLTPSAVFSQIMNPKGR) is disordered. A phosphoserine mark is found at serine 858, serine 866, serine 871, and serine 874. Residues 884-895 (AVFSQIMNPKGR) are compositionally biased toward polar residues.

The protein belongs to the protein kinase superfamily. Ser/Thr protein kinase family. In terms of assembly, interacts with ROPGEF1. Interacts with RALF1; triggering phosphorylation status and subsequent activation. Interacts with LRE and LLG1. Interacts, via its extracellular domain, with FERONIA at the synergid cell surface. Post-translationally, autophosphorylated. In terms of processing, phosphorylated at Ser-858, Ser-871 and Ser-874 upon activation by RALF1. In terms of tissue distribution, expressed in leaves, buds, flowers, siliques, young ovules primordia, and young anthers with immature pollen, but not detected in mature pollen. Highest expression in the synergid cells of the female gametophyte.

It is found in the cell membrane. It carries out the reaction L-seryl-[protein] + ATP = O-phospho-L-seryl-[protein] + ADP + H(+). It catalyses the reaction L-threonyl-[protein] + ATP = O-phospho-L-threonyl-[protein] + ADP + H(+). In terms of biological role, receptor-like protein kinase that mediates the female control of male gamete delivery during fertilization, including growth cessation of compatible pollen tubes ensuring a reproductive isolation barriers, by regulating MLO7 subcellular polarization upon pollen tube perception in the female gametophyte synergids. Required for cell elongation during vegetative growth, mostly in a brassinosteroids- (BR-) independent manner. Acts as an upstream regulator for the Rac/Rop-signaling pathway that controls ROS-mediated root hair development. Seems to regulate a cross-talk between brassinosteroids and ethylene signaling pathways during hypocotyl elongation. Negative regulator of brassinosteroid response in light-grown hypocotyls, but required for brassinosteroid response in etiolated seedlings. Mediates sensitivity to powdery mildew (e.g. Golovinomyces orontii). Positive regulator of auxin-promoted growth that represses the abscisic acid (ABA) signaling via the activation of ABI2 phosphatase. Required for RALF1-mediated extracellular alkalinization in a signaling pathway preventing cell expansion. In Arabidopsis thaliana (Mouse-ear cress), this protein is Receptor-like protein kinase FERONIA.